The chain runs to 98 residues: Co-chaperonin GroES 1 (98 aa).

Belongs to the GroES chaperonin family. Heptamer of 7 subunits arranged in a ring. Interacts with the chaperonin GroEL.

The protein resides in the cytoplasm. Functionally, together with the chaperonin GroEL, plays an essential role in assisting protein folding. The GroEL-GroES system forms a nano-cage that allows encapsulation of the non-native substrate proteins and provides a physical environment optimized to promote and accelerate protein folding. GroES binds to the apical surface of the GroEL ring, thereby capping the opening of the GroEL channel. The protein is Co-chaperonin GroES 1 of Rhodopseudomonas palustris (strain ATCC BAA-98 / CGA009).